The chain runs to 300 residues: Inosose dehydratase (300 aa).

Belongs to the IolE/MocC family. Requires glutathione as cofactor. The cofactor is Co(2+). Mn(2+) serves as cofactor.

The catalysed reaction is scyllo-inosose = 3D-3,5/4-trihydroxycyclohexane-1,2-dione + H2O. In terms of biological role, catalyzes the dehydration of inosose (2-keto-myo-inositol, 2KMI or 2,4,6/3,5-pentahydroxycyclohexanone) to 3D-(3,5/4)-trihydroxycyclohexane-1,2-dione (D-2,3-diketo-4-deoxy-epi-inositol). The polypeptide is Inosose dehydratase (Mesomycoplasma hyopneumoniae (strain J / ATCC 25934 / NCTC 10110) (Mycoplasma hyopneumoniae)).